A 595-amino-acid polypeptide reads, in one-letter code: Fructan 1-exohydrolase (595 aa).

Positions Met1–Ser20 are cleaved as a signal peptide. The active site involves Asp74. Asn167, Asn235, and Asn247 each carry an N-linked (GlcNAc...) asparagine glycan. A disulfide bond links Cys445 and Cys491. Asn566 is a glycosylation site (N-linked (GlcNAc...) asparagine).

This sequence belongs to the glycosyl hydrolase 32 family.

It carries out the reaction Hydrolysis of terminal, non-reducing (2-&gt;1)-linked beta-D-fructofuranose residues in fructans.. Its activity is regulated as follows. Inhibited by sucrose. In terms of biological role, hydrolyzes inulin-type beta-(2,1)-fructans. May play a role as a beta-(2,1)-trimmer during graminan biosynthesis. This chain is Fructan 1-exohydrolase, found in Aegilops speltoides (Goatgrass).